Here is a 317-residue protein sequence, read N- to C-terminus: Eukaryotic translation initiation factor 2 subunit 2 (317 aa).

The segment at 1-146 (MSATEEENVL…KEKTITTSDG (146 aa)) is disordered. The span at 79-90 (AIEKLENEGAHD) shows a compositional bias: basic and acidic residues. Positions 109-125 (KSSTTTTTSTTTTTTEP) are enriched in low complexity. A C4-type zinc finger spans residues 222 to 246 (HVYNYVFAELGTNGSIDGNQRLVIR).

It belongs to the eIF-2-beta/eIF-5 family. Eukaryotic translation initiation factor 2 eIF2 is a heterotrimeric complex composed of an alpha, a beta and a gamma subunit.

It is found in the cytoplasm. Its subcellular location is the cytosol. Functionally, component of the eIF2 complex that functions in the early steps of protein synthesis by forming a ternary complex with GTP and initiator tRNA. This complex binds to a 40S ribosomal subunit, followed by mRNA binding to form a 43S pre-initiation complex (43S PIC). Junction of the 60S ribosomal subunit to form the 80S initiation complex is preceded by hydrolysis of the GTP bound to eIF2 and release of an eIF2-GDP binary complex. In order for eIF2 to recycle and catalyze another round of initiation, the GDP bound to eIF2 must exchange with GTP by way of a reaction catalyzed by eIF2B. This Dictyostelium discoideum (Social amoeba) protein is Eukaryotic translation initiation factor 2 subunit 2 (eif2s2).